The following is a 210-amino-acid chain: Chaperone protein TorD (210 aa).

Belongs to the TorD/DmsD family. TorD subfamily.

It localises to the cytoplasm. Its function is as follows. Involved in the biogenesis of TorA. Acts on TorA before the insertion of the molybdenum cofactor and, as a result, probably favors a conformation of the apoenzyme that is competent for acquiring the cofactor. In Salmonella agona (strain SL483), this protein is Chaperone protein TorD.